A 295-amino-acid polypeptide reads, in one-letter code: Pyridoxal 5'-phosphate synthase subunit PdxS (295 aa).

Residue D25 coordinates D-ribose 5-phosphate. The active-site Schiff-base intermediate with D-ribose 5-phosphate is the K82. G154 serves as a coordination point for D-ribose 5-phosphate. R166 contributes to the D-glyceraldehyde 3-phosphate binding site. D-ribose 5-phosphate is bound by residues G215 and G236–S237.

Belongs to the PdxS/SNZ family. In the presence of PdxT, forms a dodecamer of heterodimers.

It catalyses the reaction aldehydo-D-ribose 5-phosphate + D-glyceraldehyde 3-phosphate + L-glutamine = pyridoxal 5'-phosphate + L-glutamate + phosphate + 3 H2O + H(+). It functions in the pathway cofactor biosynthesis; pyridoxal 5'-phosphate biosynthesis. In terms of biological role, catalyzes the formation of pyridoxal 5'-phosphate from ribose 5-phosphate (RBP), glyceraldehyde 3-phosphate (G3P) and ammonia. The ammonia is provided by the PdxT subunit. Can also use ribulose 5-phosphate and dihydroxyacetone phosphate as substrates, resulting from enzyme-catalyzed isomerization of RBP and G3P, respectively. This is Pyridoxal 5'-phosphate synthase subunit PdxS from Actinobacillus pleuropneumoniae serotype 7 (strain AP76).